A 465-amino-acid chain; its full sequence is Argininosuccinate lyase (465 aa).

This sequence belongs to the lyase 1 family. Argininosuccinate lyase subfamily.

The protein resides in the cytoplasm. The enzyme catalyses 2-(N(omega)-L-arginino)succinate = fumarate + L-arginine. Its pathway is amino-acid biosynthesis; L-arginine biosynthesis; L-arginine from L-ornithine and carbamoyl phosphate: step 3/3. The protein is Argininosuccinate lyase of Rhodopseudomonas palustris (strain BisB18).